The following is a 1034-amino-acid chain: DNA polymerase I B, chloroplastic/mitochondrial (1034 aa).

A chloroplast and mitochondrion-targeting transit peptide spans 1-55; that stretch reads MGVSLRHLSPSSFWVSRRPRVSSSILSFLVPRRRILCTRKVAIIKGNAGYSTATD. Residues 270 to 468 enclose the 3'-5' exonuclease domain; it reads ACDTEVSRID…LYESMKKQLQ (199 aa). Residues 700-1030 form a polymerase region; it reads HAIAALCEVC…SVDAKCAQNW (331 aa).

This sequence belongs to the DNA polymerase type-A family. As to expression, expressed in shoot apical meristem.

The protein resides in the mitochondrion. It is found in the plastid. It localises to the chloroplast. It carries out the reaction DNA(n) + a 2'-deoxyribonucleoside 5'-triphosphate = DNA(n+1) + diphosphate. Its activity is regulated as follows. Not inhibited by aphidicolin. In addition to polymerase activity, this DNA polymerase exhibits 5'-3' exonuclease activity. Required for DNA replication and accumulation in plastids and mitochondria. This is DNA polymerase I B, chloroplastic/mitochondrial (POLIB) from Arabidopsis thaliana (Mouse-ear cress).